The chain runs to 92 residues: Small ribosomal subunit protein bS20 (92 aa).

It belongs to the bacterial ribosomal protein bS20 family.

In terms of biological role, binds directly to 16S ribosomal RNA. This chain is Small ribosomal subunit protein bS20, found in Magnetococcus marinus (strain ATCC BAA-1437 / JCM 17883 / MC-1).